Here is a 425-residue protein sequence, read N- to C-terminus: UPF0229 protein YE2273 (425 aa).

The disordered stretch occupies residues 84 to 110 (TNDRIERPQGGGGGSGSGQGNAGQDGE). The span at 92–108 (QGGGGGSGSGQGNAGQD) shows a compositional bias: gly residues.

Belongs to the UPF0229 family.

The protein is UPF0229 protein YE2273 of Yersinia enterocolitica serotype O:8 / biotype 1B (strain NCTC 13174 / 8081).